A 329-amino-acid chain; its full sequence is CDP-diacylglycerol--glycerol-3-phosphate 3-phosphatidyltransferase 1, chloroplastic (329 aa).

Residues 1 to 38 (MAFLKTLNPLLRRSPTPIPNPRSLLSLDAFLAASSPTA) constitute a chloroplast transit peptide. 4 helical membrane passes run 150–170 (PVIGWMIVNEWYLPAFGTLAL), 190–210 (VFGSYLDPLADKVLIGCVAIA), 217–237 (LHPGLVGLVVVRDLLLVGGAV), and 300–320 (ITVLSWLVASTTIASTVGYGI).

The protein belongs to the CDP-alcohol phosphatidyltransferase class-I family. Mn(2+) serves as cofactor.

It is found in the plastid. Its subcellular location is the chloroplast membrane. The catalysed reaction is a CDP-1,2-diacyl-sn-glycerol + sn-glycerol 3-phosphate = a 1,2-diacyl-sn-glycero-3-phospho-(1'-sn-glycero-3'-phosphate) + CMP + H(+). Its pathway is phospholipid metabolism; phosphatidylglycerol biosynthesis; phosphatidylglycerol from CDP-diacylglycerol: step 1/2. Catalyzes the committed step to the synthesis of the acidic phospholipids. Transfers specifically a phosphatidyl group from CDP-diacylglycerol to glycerol-3-phosphate to form phosphatidylglycerophosphate. The chain is CDP-diacylglycerol--glycerol-3-phosphate 3-phosphatidyltransferase 1, chloroplastic from Oryza sativa subsp. japonica (Rice).